Reading from the N-terminus, the 367-residue chain is UDP-N-acetylglucosamine--N-acetylmuramyl-(pentapeptide) pyrophosphoryl-undecaprenol N-acetylglucosamine transferase (367 aa).

Residues threonine 13–glycine 15, arginine 168, serine 196, isoleucine 252, and glutamine 297 each bind UDP-N-acetyl-alpha-D-glucosamine.

Belongs to the glycosyltransferase 28 family. MurG subfamily.

The protein resides in the cell inner membrane. The catalysed reaction is di-trans,octa-cis-undecaprenyl diphospho-N-acetyl-alpha-D-muramoyl-L-alanyl-D-glutamyl-meso-2,6-diaminopimeloyl-D-alanyl-D-alanine + UDP-N-acetyl-alpha-D-glucosamine = di-trans,octa-cis-undecaprenyl diphospho-[N-acetyl-alpha-D-glucosaminyl-(1-&gt;4)]-N-acetyl-alpha-D-muramoyl-L-alanyl-D-glutamyl-meso-2,6-diaminopimeloyl-D-alanyl-D-alanine + UDP + H(+). It functions in the pathway cell wall biogenesis; peptidoglycan biosynthesis. Functionally, cell wall formation. Catalyzes the transfer of a GlcNAc subunit on undecaprenyl-pyrophosphoryl-MurNAc-pentapeptide (lipid intermediate I) to form undecaprenyl-pyrophosphoryl-MurNAc-(pentapeptide)GlcNAc (lipid intermediate II). The polypeptide is UDP-N-acetylglucosamine--N-acetylmuramyl-(pentapeptide) pyrophosphoryl-undecaprenol N-acetylglucosamine transferase (Methylibium petroleiphilum (strain ATCC BAA-1232 / LMG 22953 / PM1)).